Here is an 88-residue protein sequence, read N- to C-terminus: Small ribosomal subunit protein bS20 (88 aa).

The interval 1–20 (MANHKSAEKRARQTIKRTER) is disordered.

Belongs to the bacterial ribosomal protein bS20 family.

Binds directly to 16S ribosomal RNA. The polypeptide is Small ribosomal subunit protein bS20 (Campylobacter fetus subsp. fetus (strain 82-40)).